The sequence spans 177 residues: Acetyltransferase (177 aa).

The N-acetyltransferase domain occupies 4–174 (AQLRRVTAES…PTAIYFKTLG (171 aa)). Acetyl-CoA is bound by residues glutamate 27, 96-98 (LMV), 104-109 (GRGLGR), 130-131 (DT), and tyrosine 141.

Renders tabtoxin-producing pathogens tolerant to their own phytotoxins. The sequence is that of Acetyltransferase (ttr) from Pseudomonas amygdali pv. tabaci (Pseudomonas syringae pv. tabaci).